Reading from the N-terminus, the 283-residue chain is uncharacterized protein (283 aa).

Transmembrane regions (helical) follow at residues 24 to 44, 64 to 84, and 96 to 116; these read LFGY…GMFI, TIAG…TLIA, and VIAI…GSLS.

It belongs to the MscS (TC 1.A.23) family.

Its subcellular location is the cell membrane. This is an uncharacterized protein from Buchnera aphidicola subsp. Schizaphis graminum (strain Sg).